Here is a 197-residue protein sequence, read N- to C-terminus: SERTA domain-containing protein 3 (197 aa).

The tract at residues 1-23 (MGGLKRKHSDLEEEEEEEKWDWS) is disordered. Residues 27-74 (LRSYQQALLRISLDKVQRSLGPRAPSLRRHVLIHNTLQQLQAAIRLAP) enclose the SERTA domain.

In terms of assembly, interacts with RPA2.

It is found in the nucleus. Its subcellular location is the nucleolus. Its function is as follows. Antiviral interferon-stimulated protein that plays a role in innate immunity and in the suppression of viruses through different mechanisms. Plays a role in the late phase response of TLR-induced immune effector expression. Strong transcriptional coactivator. In Mus musculus (Mouse), this protein is SERTA domain-containing protein 3 (Sertad3).